Reading from the N-terminus, the 741-residue chain is MGPPGPALPATMNNSSSETRGHPHSASSPSERVFPMPLPRKAPLNIPGTPVLEDFPQNDDEKERLQRRRSRVFDLQFSTDSPRLLASPSSRSIDISATIPKFTNTQITEHYSTCIKLSTENKITTKNAFGLHLIDFMSEILKQKDTEPTNFKVAAGTLDASTKIYAVRVDAVHADVYRVLGGLGKDAPSLEEVEGHVADGSATEMGTTKKAVKPKKKHLHRTIEQNINNLNVSEADRKCEIDPMFQKTAASFDECSTAGVFLSTLHCQDYRSELLFPSDVQTLSTGEPLELPELGCVEMTDLKAPLQQCAEDRQICPSLAGFQFTQWDSETHNESVSALVDKFKKNDQVFDINAEVDESDCGDFPDGSLGDDFDANDEPDHTAVGDHEEFRSWKEPCQVQSCQEEMISLGDGDIRTMCPLLSMKPGEYSYFSPRTMSMWAGPDHWRFRPRRKQDAPSQSENKKKSTKKDFEIDFEDDIDFDVYFRKTKAATILTKSTLENQNWRATTLPTDFNYNVDTLVQLHLKPGTRLLKMAQGHRVETEHYEEIEDYDYNNPNDTSNFCPGLQAADSDDEDLDDLFVGPVGNSDLSPYPCHPPKTAQQNGDTPEAQGLDITTYGESNLVAEPQKVNKIEIHYAKTAKKMDMKKLKQSMWSLLTALSGKEADAEANHREAGKEAALAEVADEKMLSGLTKDLQRSLPPVMAQNLSIPLAFACLLHLANEKNLKLEGTEDLSDVLVRQGD.

Positions 1-67 (MGPPGPALPA…NDDEKERLQR (67 aa)) are disordered. Phosphoserine occurs at positions 15, 25, and 28. At threonine 49 the chain carries Phosphothreonine. Residues serine 70, serine 78, serine 81, serine 87, serine 89, serine 92, serine 96, serine 201, and serine 233 each carry the phosphoserine modification. Acidic residues predominate over residues 361–377 (CGDFPDGSLGDDFDAND). The segment at 361–383 (CGDFPDGSLGDDFDANDEPDHTA) is disordered. The residue at position 432 (serine 432) is a Phosphoserine. The segment at 447–467 (FRPRRKQDAPSQSENKKKSTK) is disordered. Lysine 488 participates in a covalent cross-link: Glycyl lysine isopeptide (Lys-Gly) (interchain with G-Cter in SUMO2). Serine 496 bears the Phosphoserine mark. Residues threonine 598 and threonine 605 each carry the phosphothreonine modification. Residue lysine 637 is modified to N6-acetyllysine.

It belongs to the CND2 (condensin subunit 2) family. In terms of assembly, component of the condensin complex, which contains the SMC2 and SMC4 heterodimer, and three non SMC subunits that probably regulate the complex: NCAPH/BRRN1, NCAPD2/CAPD2 and NCAPG. In terms of processing, phosphorylated by CDK1. Its phosphorylation, as well as that of NCAPD2 and NCAPG subunits, activates the condensin complex and is required for chromosome condensation. Widely expressed at low level. Expressed in proliferating cells.

The protein resides in the nucleus. It is found in the cytoplasm. Its subcellular location is the chromosome. Its function is as follows. Regulatory subunit of the condensin complex, a complex required for conversion of interphase chromatin into mitotic-like condense chromosomes. The condensin complex probably introduces positive supercoils into relaxed DNA in the presence of type I topoisomerases and converts nicked DNA into positive knotted forms in the presence of type II topoisomerases. Early in neurogenesis, may play an essential role to ensure accurate mitotic chromosome condensation in neuron stem cells, ultimately affecting neuron pool and cortex size. The polypeptide is Condensin complex subunit 2 (Homo sapiens (Human)).